A 259-amino-acid chain; its full sequence is Peptide methionine sulfoxide reductase (259 aa).

A disordered region spans residues 66–90; the sequence is TRTPADASMDQSSIAQGPDDDIPAP.

Belongs to the MsrA Met sulfoxide reductase family.

The enzyme catalyses L-methionyl-[protein] + [thioredoxin]-disulfide + H2O = L-methionyl-(S)-S-oxide-[protein] + [thioredoxin]-dithiol. The catalysed reaction is [thioredoxin]-disulfide + L-methionine + H2O = L-methionine (S)-S-oxide + [thioredoxin]-dithiol. Functionally, has an important function as a repair enzyme for proteins that have been inactivated by oxidation. Catalyzes the reversible oxidation-reduction of methionine sulfoxide in proteins to methionine. The sequence is that of Peptide methionine sulfoxide reductase from Lactuca sativa (Garden lettuce).